Consider the following 317-residue polypeptide: ATP synthase gamma chain (317 aa).

Belongs to the ATPase gamma chain family. F-type ATPases have 2 components, CF(1) - the catalytic core - and CF(0) - the membrane proton channel. CF(1) has five subunits: alpha(3), beta(3), gamma(1), delta(1), epsilon(1). CF(0) has three main subunits: a, b and c.

It is found in the cellular thylakoid membrane. Functionally, produces ATP from ADP in the presence of a proton gradient across the membrane. The gamma chain is believed to be important in regulating ATPase activity and the flow of protons through the CF(0) complex. This is ATP synthase gamma chain from Acaryochloris marina (strain MBIC 11017).